The following is a 269-amino-acid chain: Shikimate dehydrogenase (NADP(+)) (269 aa).

Residues 17–19 and T64 each bind shikimate; that span reads SKS. The Proton acceptor role is filled by K68. E80 lines the NADP(+) pocket. Positions 89 and 105 each coordinate shikimate. Residues 130–134, 154–159, and M213 contribute to the NADP(+) site; these read GAGGA and NRTRAK. Y215 contacts shikimate. Position 237 (G237) interacts with NADP(+).

It belongs to the shikimate dehydrogenase family. In terms of assembly, homodimer.

The catalysed reaction is shikimate + NADP(+) = 3-dehydroshikimate + NADPH + H(+). Its pathway is metabolic intermediate biosynthesis; chorismate biosynthesis; chorismate from D-erythrose 4-phosphate and phosphoenolpyruvate: step 4/7. Its function is as follows. Involved in the biosynthesis of the chorismate, which leads to the biosynthesis of aromatic amino acids. Catalyzes the reversible NADPH linked reduction of 3-dehydroshikimate (DHSA) to yield shikimate (SA). This is Shikimate dehydrogenase (NADP(+)) from Neisseria lactamica.